Reading from the N-terminus, the 240-residue chain is Fibronectin type III domain-containing protein 5 (240 aa).

Over residues 1–10 (MQAARGGAGR) the composition is skewed to gly residues. Positions 1 to 33 (MQAARGGAGRPGREGRGLERECERSPGPGVAMP) are disordered. Over residues 11–24 (PGREGRGLERECER) the composition is skewed to basic and acidic residues. The 92-residue stretch at 64–155 (APVNVTVRHL…EPVLFKTPRE (92 aa)) folds into the Fibronectin type-III domain. Residues Asn67 and Asn112 are each glycosylated (N-linked (GlcNAc...) asparagine). Residues 181 to 201 (GEVLIIVVVLFMWAGVIALFC) form a helical membrane-spanning segment. The span at 210–221 (NEPNNNKEKTKS) shows a compositional bias: basic and acidic residues. The interval 210–240 (NEPNNNKEKTKSASETSTPEHQGGGLLRSKI) is disordered. The segment covering 231–240 (QGGGLLRSKI) has biased composition (gly residues). A Microbody targeting signal motif is present at residues 238-240 (SKI).

Dimer; may exist in other oligomeric forms. The extracellular domain is cleaved and released from the cell membrane. In terms of processing, N-Glycosylated. In terms of tissue distribution, in adult, it is highly expressed in skeletal muscle, heart and brain.

Its subcellular location is the cell membrane. It localises to the peroxisome membrane. The protein localises to the secreted. Functionally, mediates beneficial effects of muscular exercise. Induces browning of white adipose tissue by stimulating UCP1 expression, at least in part, via the nuclear receptor PPARA. This chain is Fibronectin type III domain-containing protein 5 (Fndc5), found in Mus musculus (Mouse).